The primary structure comprises 504 residues: Light-independent protochlorophyllide reductase subunit B (504 aa).

Position 36 (aspartate 36) interacts with [4Fe-4S] cluster. Residue aspartate 279 is the Proton donor of the active site. 414–415 (GL) lines the substrate pocket.

Belongs to the ChlB/BchB/BchZ family. In terms of assembly, protochlorophyllide reductase is composed of three subunits; BchL, BchN and BchB. Forms a heterotetramer of two BchB and two BchN subunits. [4Fe-4S] cluster serves as cofactor.

It catalyses the reaction chlorophyllide a + oxidized 2[4Fe-4S]-[ferredoxin] + 2 ADP + 2 phosphate = protochlorophyllide a + reduced 2[4Fe-4S]-[ferredoxin] + 2 ATP + 2 H2O. The protein operates within porphyrin-containing compound metabolism; bacteriochlorophyll biosynthesis (light-independent). In terms of biological role, component of the dark-operative protochlorophyllide reductase (DPOR) that uses Mg-ATP and reduced ferredoxin to reduce ring D of protochlorophyllide (Pchlide) to form chlorophyllide a (Chlide). This reaction is light-independent. The NB-protein (BchN-BchB) is the catalytic component of the complex. The chain is Light-independent protochlorophyllide reductase subunit B from Acidiphilium rubrum.